The sequence spans 254 residues: Triosephosphate isomerase (254 aa).

12-14 is a substrate binding site; it reads NWK. His99 functions as the Electrophile in the catalytic mechanism. The Proton acceptor role is filled by Glu169. Substrate is bound by residues Gly175, Ser214, and 235–236; that span reads GG.

This sequence belongs to the triosephosphate isomerase family. In terms of assembly, homodimer.

The protein localises to the cytoplasm. It catalyses the reaction D-glyceraldehyde 3-phosphate = dihydroxyacetone phosphate. Its pathway is carbohydrate biosynthesis; gluconeogenesis. It participates in carbohydrate degradation; glycolysis; D-glyceraldehyde 3-phosphate from glycerone phosphate: step 1/1. In terms of biological role, involved in the gluconeogenesis. Catalyzes stereospecifically the conversion of dihydroxyacetone phosphate (DHAP) to D-glyceraldehyde-3-phosphate (G3P). The polypeptide is Triosephosphate isomerase (Chelativorans sp. (strain BNC1)).